A 138-amino-acid chain; its full sequence is Large ribosomal subunit protein eL32 (138 aa).

This sequence belongs to the eukaryotic ribosomal protein eL32 family.

The sequence is that of Large ribosomal subunit protein eL32 (rpl32e) from Saccharolobus solfataricus (strain ATCC 35092 / DSM 1617 / JCM 11322 / P2) (Sulfolobus solfataricus).